We begin with the raw amino-acid sequence, 192 residues long: Dynein axonemal light chain 1 (192 aa).

LRR repeat units lie at residues N49–K70, Y71–G92, T94–K115, and K116–G137. Residues N150 to S192 enclose the LRRCT domain.

The protein belongs to the dynein light chain LC1-type family. As to quaternary structure, interacts with DNAH5, a outer arm dynein heavy chain. Interacts with tubulin located within the A-tubule of the outer doublets in a ATP-independent manner.

It is found in the cytoplasm. The protein resides in the cytoskeleton. It localises to the cilium axoneme. Functionally, part of the multisubunit axonemal ATPase complexes that generate the force for cilia motility and govern beat frequency. Component of the outer arm dynein (ODA). May be involved in a mechanosensory feedback mechanism controlling ODA activity based on external conformational cues by tethering the outer arm dynein heavy chain (DNAH5) to the microtubule within the axoneme. This chain is Dynein axonemal light chain 1 (dnal1), found in Xenopus laevis (African clawed frog).